The primary structure comprises 317 residues: Nucleoside ABC transporter permease protein NupC (317 aa).

10 consecutive transmembrane segments (helical) span residues 9 to 29 (IIVA…IGGV), 35 to 55 (GIVN…SVVF), 62 to 82 (MFGS…GALF), 98 to 118 (IVSG…LLQV), 132 to 151 (GYWN…IFFT), 155 to 172 (LPGF…YVLF), 203 to 223 (AGVL…AQAI), 225 to 245 (GNFS…AMIF), 251 to 271 (IGAM…VVGG), and 286 to 306 (MAPY…AIAP).

This sequence belongs to the binding-protein-dependent transport system permease family. In terms of assembly, the complex is composed of two ATP-binding proteins (NupA), two transmembrane proteins (NupB and NupC) and a solute-binding protein (BmpA).

Its subcellular location is the cell membrane. In terms of biological role, part of an ABC transporter complex involved in the uptake of all common nucleosides. Responsible for the translocation of the substrate across the membrane. This chain is Nucleoside ABC transporter permease protein NupC, found in Lactococcus lactis subsp. cremoris (strain MG1363).